Consider the following 322-residue polypeptide: CXXC-type zinc finger protein 5 (322 aa).

Residues 1 to 10 show a composition bias toward gly residues; sequence MSSLGGGSQD. The segment at 1–100 is disordered; it reads MSSLGGGSQD…SGGGSMMGGE (100 aa). 2 stretches are compositionally biased toward low complexity: residues 11–20 and 28–52; these read AGGSSSSSTN and SGPKAGAADKSAVVAAAAPASVADD. Threonine 53 is subject to Phosphothreonine. Residues 87–97 show a composition bias toward gly residues; the sequence is SSGGSGGGSMM. The CXXC-type zinc-finger motif lies at 256 to 297; that stretch reads GKKKRKRCGMCAPCRRRINCEQCSSCRNRKTGHQICKFRKCE. A Nuclear localization signal motif is present at residues 257 to 262; the sequence is KKKRKR. Residues cysteine 263, cysteine 266, cysteine 269, cysteine 275, cysteine 278, cysteine 281, cysteine 291, and cysteine 296 each coordinate Zn(2+).

Interacts with DVL1. Interacts with RBPJ.

It localises to the nucleus. The protein resides in the cytoplasm. Functionally, may indirectly participate in activation of the NF-kappa-B and MAPK pathways. Acts as a mediator of BMP4-mediated modulation of canonical Wnt signaling activity in neural stem cells. Required for DNA damage-induced ATM phosphorylation, p53 activation and cell cycle arrest. Involved in myelopoiesis. Transcription factor. Binds to the oxygen responsive element of COX4I2 and represses its transcription under hypoxia conditions (4% oxygen), as well as normoxia conditions (20% oxygen). May repress COX4I2 transactivation induced by CHCHD2 and RBPJ. Binds preferentially to DNA containing cytidine-phosphate-guanosine (CpG) dinucleotides over CpH (H=A, T, and C), hemimethylated-CpG and hemimethylated-hydroxymethyl-CpG. This Homo sapiens (Human) protein is CXXC-type zinc finger protein 5 (CXXC5).